Consider the following 254-residue polypeptide: Sensory rhodopsin (254 aa).

Residues 1–4 (MTGA) are Extracellular-facing. A helical transmembrane segment spans residues 5–26 (VTSAYWLAAVAFLIGVGITAAL). Residues 27-35 (YAKLEGSRA) are Cytoplasmic-facing. Residues 36 to 57 (RTRLAALAVIPGFAGLSYVGMA) form a helical membrane-spanning segment. Residues 58-71 (LGIGTVTVNGAELV) are Extracellular-facing. The helical transmembrane segment at 72–93 (GLRYVDWVVTTPLLVGFIGYNA) threads the bilayer. Residues 94 to 96 (GAS) lie on the Cytoplasmic side of the membrane. The helical transmembrane segment at 97–119 (RRAIAGVMIADALMIVFGAAAVV) threads the bilayer. The Extracellular portion of the chain corresponds to 120–123 (SGGT). A helical transmembrane segment spans residues 124–151 (LKWALFGVSALFHVSLFAYLYVIFPGGI). At 152–154 (PDD) the chain is on the cytoplasmic side. Residues 155–182 (PMQRGLFSLLKNHVGLLWLAYPFVWLMG) traverse the membrane as a helical segment. Residues 183–190 (PAGIGFTG) are Extracellular-facing. The chain crosses the membrane as a helical span at residues 191-223 (AVGAALTYAFLDVLAKVPYVYFFYARRQAFIDV). Lys206 is subject to N6-(retinylidene)lysine. Residues 224 to 254 (TDSRAAAKGDGPAVGGEAPVATGDDAPTAAD) lie on the Cytoplasmic side of the membrane. Residues 231 to 254 (KGDGPAVGGEAPVATGDDAPTAAD) are disordered.

This sequence belongs to the archaeal/bacterial/fungal opsin family.

Its subcellular location is the cell membrane. Functionally, involved in the control of phototaxis. This Halorubrum sodomense protein is Sensory rhodopsin (sop).